Consider the following 2345-residue polypeptide: Acetyl-CoA carboxylase 1 (2345 aa).

The residue at position 1 (Met1) is an N-acetylmethionine. Residues Ser5, Ser23, Ser25, Ser29, Ser34, Ser47, Ser49, and Ser52 each carry the phosphoserine modification. Phosphothreonine is present on Thr57. A phosphoserine mark is found at Ser77 and Ser79. Position 79 is a phosphoserine; by AMPK (Ser79). The Biotin carboxylation domain occupies Val116–Ala617. Residues Ser274–Met465 enclose the ATP-grasp domain. An ATP-binding site is contributed by Ala300–Leu357. Mg(2+) contacts are provided by Glu423, Glu436, and Asn438. The Mn(2+) site is built by Glu423, Glu436, and Asn438. Residue Arg440 is part of the active site. Thr609 carries the phosphothreonine modification. The region spanning Phe744–Gln818 is the Biotinyl-binding domain. Residue Lys785 is modified to N6-biotinyllysine. Phosphoserine occurs at positions 834, 1200, 1215, and 1217. Thr1226 is modified (phosphothreonine). Phosphoserine is present on residues Ser1258, Ser1262, and Ser1272. N6-acetyllysine is present on Lys1333. The CoA carboxyltransferase N-terminal domain occupies Pro1575 to Asn1913. The interval Pro1575–Asn2233 is carboxyltransferase. Residues Arg1822, Lys2126, and Arg2128 each contribute to the CoA site. The CoA carboxyltransferase C-terminal domain maps to Pro1917–Asn2233. Residue Thr2152 is modified to Phosphothreonine.

Monomer, homodimer, and homotetramer. Can form filamentous polymers. Interacts in its inactive phosphorylated form with the BRCT domains of BRCA1 which prevents ACACA dephosphorylation and inhibits lipid synthesis. Interacts with MID1IP1; interaction with MID1IP1 promotes oligomerization and increases its activity. It depends on Mg(2+) as a cofactor. The cofactor is Mn(2+). Biotin serves as cofactor. Post-translationally, phosphorylation on Ser-1262 is required for interaction with BRCA1. Phosphorylation at Ser-79 by AMPK inactivates enzyme activity. In terms of processing, the biotin cofactor is covalently attached to the central biotinyl-binding domain and is required for the catalytic activity.

It is found in the cytoplasm. It localises to the cytosol. It catalyses the reaction hydrogencarbonate + acetyl-CoA + ATP = malonyl-CoA + ADP + phosphate + H(+). It functions in the pathway lipid metabolism; malonyl-CoA biosynthesis; malonyl-CoA from acetyl-CoA: step 1/1. With respect to regulation, inhibited by phosphorylation. Citrate promotes oligomerization of the protein into filaments that correspond to the most active form of the carboxylase. In terms of biological role, cytosolic enzyme that catalyzes the carboxylation of acetyl-CoA to malonyl-CoA, the first and rate-limiting step of de novo fatty acid biosynthesis. This is a 2 steps reaction starting with the ATP-dependent carboxylation of the biotin carried by the biotin carboxyl carrier (BCC) domain followed by the transfer of the carboxyl group from carboxylated biotin to acetyl-CoA. The chain is Acetyl-CoA carboxylase 1 from Mus musculus (Mouse).